The primary structure comprises 230 residues: MEGQRWLPLEANPEVTNQFLKQLGLHPNWQFVDVYGMDPELLSMVPRPVCAVLLLFPITEKYEVFRTEEEEKIKSQGQDVTPSVYFMKQTISNACGTIGLIHAIANNKNKMHFESGSTLKKFLEESASMSPDERARYLESYDAIPVTHETSAHEGQTEAPNIDEKVDLHFIALVHVDGHLYELDGRKPFPINHGETSDETLLEDAIEVCKKFMERDPDELRFNAIALSAA.

Residues 5–229 (RWLPLEANPE…LRFNAIALSA (225 aa)) form the UCH catalytic domain. Residues 8 to 13 (PLEANP) form an interaction with ubiquitin region. Cys-95 serves as the catalytic Nucleophile. The residue at position 130 (Ser-130) is a Phosphoserine. The tract at residues 152–159 (AHEGQTEA) is interaction with ubiquitin. Crossover loop which restricts access of large ubiquitin adducts to the active site. Catalysis depends on His-169, which acts as the Proton donor. Residues 219-224 (ELRFNA) are interaction with ubiquitin.

It belongs to the peptidase C12 family. In terms of assembly, preferentially binds diubiquitin; the interaction does not hydrolyze diubiquitin but, in vitro, inhibits the hydrolyzing activity on other substrates.

The protein resides in the cytoplasm. It catalyses the reaction Thiol-dependent hydrolysis of ester, thioester, amide, peptide and isopeptide bonds formed by the C-terminal Gly of ubiquitin (a 76-residue protein attached to proteins as an intracellular targeting signal).. Inhibited by monoubiquitin and diubiquitin. Deubiquitinating enzyme (DUB) that controls levels of cellular ubiquitin through processing of ubiquitin precursors and ubiquitinated proteins. Thiol protease that recognizes and hydrolyzes a peptide bond at the C-terminal glycine of either ubiquitin or NEDD8. Has a 10-fold preference for Arg and Lys at position P3, and exhibits a preference towards 'Lys-48'-linked ubiquitin chains. Deubiquitinates ENAC in apical compartments, thereby regulating apical membrane recycling. Indirectly increases the phosphorylation of IGFIR, AKT and FOXO1 and promotes insulin-signaling and insulin-induced adipogenesis. Required for stress-response retinal, skeletal muscle and germ cell maintenance. May be involved in working memory. Can hydrolyze UBB(+1), a mutated form of ubiquitin which is not effectively degraded by the proteasome. The protein is Ubiquitin carboxyl-terminal hydrolase isozyme L3 (UCHL3) of Sus scrofa (Pig).